Here is a 268-residue protein sequence, read N- to C-terminus: Orotidine 5'-phosphate decarboxylase (268 aa).

Substrate-binding positions include aspartate 39, 61-63 (KTH), 93-102 (DRKFADIGNT), tyrosine 219, and arginine 237. The active-site Proton donor is lysine 95.

The protein belongs to the OMP decarboxylase family.

The enzyme catalyses orotidine 5'-phosphate + H(+) = UMP + CO2. It participates in pyrimidine metabolism; UMP biosynthesis via de novo pathway; UMP from orotate: step 2/2. In Pachysolen tannophilus (Yeast), this protein is Orotidine 5'-phosphate decarboxylase (URA3).